We begin with the raw amino-acid sequence, 192 residues long: Neurogenic differentiation factor 1 (192 aa).

The bHLH domain maps to 19-71; the sequence is VRRVKANGRERARMHGLNNALDMLREYIPITTQHQKLSKIETLRLARNYIDAL. The tract at residues 116–192 is disordered; the sequence is PSQFDIFSDP…SHQNTFNYSP (77 aa). The segment covering 139–163 has biased composition (low complexity); it reads SSFSSSSPSSSCSPPQYYYSPTQPS.

As to expression, expressed in neuroblasts of the AB lineage. More specifically in precursors of the embryonic ventral cord motor neurons. Expressed to a lesser degree in the EMS lineage which generates mostly endoderm and mesoderm tissues.

Its subcellular location is the nucleus. Its function is as follows. Acts as a transcriptional regulator whose activity is required for several aspects of motor neuron fate specification, including cell division patterns, proper spatiotemporal expression of fate-specific markers, and normal axonal morphology and pathfinding. Involved in regulating glial specification. The sequence is that of Neurogenic differentiation factor 1 (cnd-1) from Caenorhabditis elegans.